The following is a 547-amino-acid chain: Chaperonin GroEL 1 (547 aa).

ATP-binding positions include 30–33 (TLGP), Lys51, 87–91 (DGTTT), Gly415, and Asp496.

It belongs to the chaperonin (HSP60) family. As to quaternary structure, forms a cylinder of 14 subunits composed of two heptameric rings stacked back-to-back. Interacts with the co-chaperonin GroES.

The protein localises to the cytoplasm. It carries out the reaction ATP + H2O + a folded polypeptide = ADP + phosphate + an unfolded polypeptide.. Its function is as follows. Together with its co-chaperonin GroES, plays an essential role in assisting protein folding. The GroEL-GroES system forms a nano-cage that allows encapsulation of the non-native substrate proteins and provides a physical environment optimized to promote and accelerate protein folding. The sequence is that of Chaperonin GroEL 1 from Gluconacetobacter diazotrophicus (strain ATCC 49037 / DSM 5601 / CCUG 37298 / CIP 103539 / LMG 7603 / PAl5).